The primary structure comprises 138 residues: MSGAIYGIGTDIIQIERVEGVMQRTHGRFAEKVLGPDELRIYQARKARSERRGLAFLATRFAAKEAVSKAIGLGMHWPMTWRAVQTLNLPSGQPVVRYSGELADWIAQRGLHIQISVTDERDYAVAFAVAELQSKLSA.

Residues Asp-11 and Glu-65 each contribute to the Mg(2+) site.

Belongs to the P-Pant transferase superfamily. AcpS family. It depends on Mg(2+) as a cofactor.

It is found in the cytoplasm. The catalysed reaction is apo-[ACP] + CoA = holo-[ACP] + adenosine 3',5'-bisphosphate + H(+). Functionally, transfers the 4'-phosphopantetheine moiety from coenzyme A to a Ser of acyl-carrier-protein. The protein is Holo-[acyl-carrier-protein] synthase of Ralstonia nicotianae (strain ATCC BAA-1114 / GMI1000) (Ralstonia solanacearum).